The following is a 296-amino-acid chain: MADLTLCAFLTKVLCAHGGRMFLQDLRGHVELSEAKLRAVLRRAGPERFLLQEVELRDGPWDAEAEVAAGEGAGAGSGGGATACRVMAVSSARLCARYQRGECQGCDQLHLCRRHMLGKCPHRDCWSTCSLSHDIHTPINVQVLKSRGLFGLNEGQLRILLLQNDPCLFPEVCQMYNKGVDVLYGYCSLKDRCNKFHVCKSFVRGECPFQPCKRSHQLIHAATLKLLEDQELSVSSVVNFQIISVYRHKKLHKMLEEKDHSASTEQPQGLGKQGALGAVEARPFLPARAQSPRKPQ.

Alanine 2 is modified (N-acetylalanine). 2 C3H1-type zinc fingers span residues 111–136 (LCRRHMLGKCPHRDCWSTCSLSHDIH) and 198–219 (VCKSFVRGECPFQPCKRSHQLI).

The protein is Zinc finger CCCH-type antiviral protein 1-like (Zc3hav1l) of Mus musculus (Mouse).